We begin with the raw amino-acid sequence, 145 residues long: Large ribosomal subunit protein uL16 (145 aa).

This sequence belongs to the universal ribosomal protein uL16 family. Part of the 50S ribosomal subunit.

Functionally, binds 23S rRNA and is also seen to make contacts with the A and possibly P site tRNAs. This Agathobacter rectalis (strain ATCC 33656 / DSM 3377 / JCM 17463 / KCTC 5835 / VPI 0990) (Eubacterium rectale) protein is Large ribosomal subunit protein uL16.